The chain runs to 98 residues: Putative septation protein SpoVG (98 aa).

It belongs to the SpoVG family.

Functionally, could be involved in septation. The polypeptide is Putative septation protein SpoVG (Alkaliphilus metalliredigens (strain QYMF)).